We begin with the raw amino-acid sequence, 300 residues long: NAD kinase (300 aa).

Asp-80 serves as the catalytic Proton acceptor. NAD(+) is bound by residues 80–81 (DG), 154–155 (ND), Arg-165, Arg-182, Asp-184, 195–200 (TAYALS), and Gln-253.

The protein belongs to the NAD kinase family. Requires a divalent metal cation as cofactor.

The protein localises to the cytoplasm. It catalyses the reaction NAD(+) + ATP = ADP + NADP(+) + H(+). In terms of biological role, involved in the regulation of the intracellular balance of NAD and NADP, and is a key enzyme in the biosynthesis of NADP. Catalyzes specifically the phosphorylation on 2'-hydroxyl of the adenosine moiety of NAD to yield NADP. The sequence is that of NAD kinase from Aromatoleum aromaticum (strain DSM 19018 / LMG 30748 / EbN1) (Azoarcus sp. (strain EbN1)).